A 158-amino-acid polypeptide reads, in one-letter code: uncharacterized protein (158 aa).

The region spanning 3 to 130 (YLQRVTNCVL…DGHILDFMMK (128 aa)) is the Nudix hydrolase domain. Positions 34 to 55 (GKMESGESVRDSVIREYREETG) match the Nudix box motif. Mg(2+)-binding residues include E49 and E53.

Belongs to the Nudix hydrolase family. Requires Mg(2+) as cofactor.

This is an uncharacterized protein from Bacillus subtilis (strain 168).